A 311-amino-acid polypeptide reads, in one-letter code: Malate dehydrogenase (311 aa).

Residues 7–13 (GAAGGIG) and Asp34 contribute to the NAD(+) site. Positions 81 and 87 each coordinate substrate. NAD(+) contacts are provided by residues Asn94 and 117–119 (ITN). Positions 119 and 153 each coordinate substrate. The active-site Proton acceptor is the His177. Met227 contributes to the NAD(+) binding site.

It belongs to the LDH/MDH superfamily. MDH type 1 family. Homodimer.

It carries out the reaction (S)-malate + NAD(+) = oxaloacetate + NADH + H(+). Functionally, catalyzes the reversible oxidation of malate to oxaloacetate. In Aeromonas salmonicida (strain A449), this protein is Malate dehydrogenase.